A 432-amino-acid chain; its full sequence is Peptidase B (432 aa).

Positions 196 and 201 each coordinate Mn(2+). Lysine 208 is an active-site residue. 3 residues coordinate Mn(2+): aspartate 219, aspartate 278, and glutamate 280. Arginine 282 is an active-site residue.

It belongs to the peptidase M17 family. As to quaternary structure, homohexamer. Mn(2+) is required as a cofactor.

The protein localises to the cytoplasm. It catalyses the reaction Release of an N-terminal amino acid, Xaa, from a peptide or arylamide. Xaa is preferably Glu or Asp but may be other amino acids, including Leu, Met, His, Cys and Gln.. Its function is as follows. Probably plays an important role in intracellular peptide degradation. This chain is Peptidase B, found in Yersinia pseudotuberculosis serotype O:1b (strain IP 31758).